The sequence spans 101 residues: Movement protein (101 aa).

A helical transmembrane segment spans residues 30-50 (EVAILSFVALICIYLLYLWVL). A disordered region spans residues 80-101 (PIPNTLEPTAPVHPGPFVPGQG). Positions 90-101 (PVHPGPFVPGQG) are enriched in pro residues.

The protein belongs to the mastrevirus movement protein family. As to quaternary structure, interacts with the capsid protein (CP). Part of a MP-CP-viral DNA complex.

It localises to the host membrane. Involved in the viral transport within, and between cells. In Avena sativa (Oat), this protein is Movement protein.